The primary structure comprises 137 residues: Immunoglobulin domain-containing protein oig-1 (137 aa).

The N-terminal stretch at M1 to A23 is a signal peptide. Residues P41–T133 enclose the Ig-like C2-type domain. C63 and C118 are joined by a disulfide.

In terms of tissue distribution, expressed in DD and VD GABAergic motor neurons. Expressed in a subset of head neurons including M2 motor neurons in the pharynx. Expressed in coelomocytes.

It localises to the membrane. The protein resides in the secreted. It is found in the extracellular space. Its subcellular location is the cell projection. The protein localises to the dendrite. It localises to the axon. In terms of biological role, plays a role in neural development, where it temporally regulates synapse formation in the D-type inhibitory GABAergic motor neurons, dorsal D (DD) and ventral D (VD) motor neurons. Controls the translocation of postsynaptic proteins, such as the acetylcholine receptor subunit acr-12, and presynaptic proteins, such as snb-1, along nerve cords to prevent premature synapse remodeling/formation. The polypeptide is Immunoglobulin domain-containing protein oig-1 (Caenorhabditis elegans).